The following is a 386-amino-acid chain: Tubulin beta-1 chain (386 aa).

Residues Glu7, Ser76, Gly80, Thr81, Gly82, Asn142, and Asn164 each coordinate GTP. Position 7 (Glu7) interacts with Mg(2+). The interval 363–386 (YQDATADEEGEYEDEEEDLQAEDM) is disordered. Residues 367–386 (TADEEGEYEDEEEDLQAEDM) show a composition bias toward acidic residues.

This sequence belongs to the tubulin family. As to quaternary structure, dimer of alpha and beta chains. A typical microtubule is a hollow water-filled tube with an outer diameter of 25 nm and an inner diameter of 15 nM. Alpha-beta heterodimers associate head-to-tail to form protofilaments running lengthwise along the microtubule wall with the beta-tubulin subunit facing the microtubule plus end conferring a structural polarity. Microtubules usually have 13 protofilaments but different protofilament numbers can be found in some organisms and specialized cells. The cofactor is Mg(2+).

It localises to the cytoplasm. Its subcellular location is the cytoskeleton. In terms of biological role, tubulin is the major constituent of microtubules, a cylinder consisting of laterally associated linear protofilaments composed of alpha- and beta-tubulin heterodimers. Microtubules grow by the addition of GTP-tubulin dimers to the microtubule end, where a stabilizing cap forms. Below the cap, tubulin dimers are in GDP-bound state, owing to GTPase activity of alpha-tubulin. This Avena sativa (Oat) protein is Tubulin beta-1 chain (TUBB1).